The chain runs to 399 residues: C-type lectin domain family 4 member M (399 aa).

Residues 1-49 lie on the Cytoplasmic side of the membrane; sequence MSDSKEQRVQPLGLLEEDPTTSGIRLFPRDFQFQQTHGHKSSTGCLGHG. An Endocytosis signal motif is present at residues 14-15; it reads LL. The chain crosses the membrane as a helical; Signal-anchor for type II membrane protein span at residues 50–70; sequence PLVLQLLSFTLLAGFLVAILV. Over 71 to 399 the chain is Extracellular; the sequence is QVYKGPSSLS…KKPTACFRDE (329 aa). The N-linked (GlcNAc...) asparagine glycan is linked to Asn-92. 7 repeat units span residues 108 to 130, 131 to 153, 154 to 176, 177 to 199, 200 to 222, 223 to 245, and 246 to 268. Residues 108–269 form a 7 X approximate tandem repeats region; the sequence is KLQEIYQELT…AFERLCCRCP (162 aa). Disulfide bonds link Cys-265–Cys-395, Cys-268–Cys-279, Cys-296–Cys-389, and Cys-368–Cys-381. In terms of domain architecture, C-type lectin spans 274–390; that stretch reads FFQGNCYFIS…CNVDNYWICK (117 aa). The Ca(2+) site is built by Glu-359, Asn-361, Ser-363, Glu-366, Asn-377, and Asp-378. N-linked (GlcNAc...) asparagine glycosylation occurs at Asn-361.

As to quaternary structure, homotetramer.

It is found in the membrane. Its function is as follows. Probable pathogen-recognition receptor involved in peripheral immune surveillance in liver. May mediate the endocytosis of pathogens which are subsequently degraded in lysosomal compartments. Probably recognizes in a calcium-dependent manner high mannose N-linked oligosaccharides in a variety of pathogen antigens. Is a receptor for ICAM3, probably by binding to mannose-like carbohydrates. The chain is C-type lectin domain family 4 member M (CLEC4M) from Nomascus concolor (Black crested gibbon).